Consider the following 334-residue polypeptide: Tryptophan--tRNA ligase (334 aa).

ATP is bound by residues 11–13 and 19–20; these read QPS and GN. The 'HIGH' region motif lies at 12 to 20; the sequence is PSGELTIGN. Aspartate 135 serves as a coordination point for L-tryptophan. ATP contacts are provided by residues 147 to 149, valine 186, and 195 to 199; these read GED and KMSKS. The short motif at 195–199 is the 'KMSKS' region element; that stretch reads KMSKS.

It belongs to the class-I aminoacyl-tRNA synthetase family. As to quaternary structure, homodimer.

Its subcellular location is the cytoplasm. It carries out the reaction tRNA(Trp) + L-tryptophan + ATP = L-tryptophyl-tRNA(Trp) + AMP + diphosphate + H(+). In terms of biological role, catalyzes the attachment of tryptophan to tRNA(Trp). In Salmonella typhi, this protein is Tryptophan--tRNA ligase.